The sequence spans 662 residues: ATP-dependent RNA helicase DDX3X (662 aa).

S2 is subject to N-acetylserine. Residues 2 to 139 (SHVAVENALG…KSDEDDWSKP (138 aa)) are required for TBK1 and IKBKE-dependent IFNB1 activation. Residues 12–21 (LDQQFAGLDL) carry the Nuclear export signal motif. Residues 19 to 144 (LDLNSSDNQS…DWSKPLPPSE (126 aa)) form a disordered region. A compositionally biased stretch (polar residues) spans 21-34 (LNSSDNQSGGSTAS). The interval 38 to 44 (YIPPHLR) is interaction with EIF4E. Residues 44 to 68 (RNREATKGFYDKDSSGWSSSKDKDA) show a composition bias toward basic and acidic residues. Residue K55 is modified to N6-acetyllysine. S82 and S90 each carry phosphoserine. Over residues 94–130 (GRFDDRGRGDYDGIGGRGDRSGFGKFERGGNSRWCDK) the composition is skewed to basic and acidic residues. An interaction with IKBKE region spans residues 100–110 (GRGDYDGIGGR). The interval 100–662 (GRGDYDGIGG…NSQGVDWWGN (563 aa)) is interaction with GSK3B. R101 is subject to Omega-N-methylarginine. Position 104 is a phosphotyrosine (Y104). R110 bears the Omega-N-methylarginine mark. At K118 the chain carries N6-acetyllysine. Residue S131 is modified to Phosphoserine. The interaction with CHUK stretch occupies residues 139 to 172 (PLPPSERLEQELFSGGNTGINFEKYDDIPVEATG). The Q motif signature appears at 180–208 (ESFSDVEMGEIIMGNIELTRYTRPTPVQK). A Phosphoserine modification is found at S183. 200–207 (YTRPTPVQ) is a binding site for ATP. The 193-residue stretch at 211–403 (IPIIKEKRDL…RDFLDEYIFL (193 aa)) folds into the Helicase ATP-binding domain. K215 participates in a covalent cross-link: Glycyl lysine isopeptide (Lys-Gly) (interchain with G-Cter in SUMO2). An ATP-binding site is contributed by 224 to 231 (AQTGSGKT). An involved in stimulation of ATPase activity by DNA and RNA, nucleic acid binding and unwinding region spans residues 250-259 (ALRAMKENGR). The DEAD box motif lies at 347–350 (DEAD). A Helicase C-terminal domain is found at 414 to 575 (NITQKVVWVE…EVPSWLENMA (162 aa)). A Phosphoserine modification is found at S456. Residues 536–661 (GNLGLATSFF…YNSQGVDWWG (126 aa)) form an interaction with NXF1 region. Position 592 is an omega-N-methylarginine (R592). Residues S594, S605, and S612 each carry the phosphoserine modification. The interval 601 to 633 (DYRQSSGASSSSFSSSRASSSRSGGGGHGGSRG) is disordered. A compositionally biased stretch (low complexity) spans 604 to 622 (QSSGASSSSFSSSRASSSR). Omega-N-methylarginine is present on residues R617 and R632. Gly residues predominate over residues 623–633 (SGGGGHGGSRG).

Belongs to the DEAD box helicase family. DDX3/DED1 subfamily. In terms of assembly, homodimer; can bind RNA as a monomer and as a dimer/oligomer. Interacts with TDRD3. When phosphorylated, interacts with IRF3; the interaction facilitates the phosphorylation and activation of IRF3 by IKBKE. Directly interacts with XPO1/CRM1. The interaction with XPO1/CMR1 is dependent on the DDX3X nuclear export signal motif and XPO1 interaction with GTPase RAN in its active GTP-bound form. Weakly interacts with TBKBP1/SINTBAD. Directly interacts with TRAF3; this interaction stimulates TRAF3 'Lys-63' ubiquitination. Interacts with CSNK1E in a Wnt-dependent manner; this interaction greatly enhances CSNK1E affinity for ATP, stimulates its kinase activity and promotes CSNK1E-mediated DVL2 phosphorylation. In the presence of RNA, the interaction is decreased. Also interacts with CSNK1D and stimulates its kinase activity. Interacts with TRPV4; this interaction is decreased when the TRPV4 channel is activated, leading to DDX3X relocalization to the nucleus. Interacts with MAP3K14/NIK. Directly interacts with CHUK/IKKA after physiological activation of the TLR7 and TLR8 pathways; this interaction enhances CHUK autophosphorylation. May associate with EIF4F complex, composed of at least EIF4A, EIF4E and EIF4G1/EIF4G3. Directly interacts with EIF4E in an RNA-independent manner; this interaction enhances EIF4E cap-binding ability. Directly interacts with EIF4G1 in an RNA-independent manner. DDX3X competes with EIF4G1 for interaction with EIF4E. Interacts with EIF4A1 and EIF2S1 in an RNA-independent manner. Associates with the eukaryotic translation initiation factor 3 (eIF-3) complex, including with EIF3B and EIF3C subunits. Directly interacts with IKBKE/IKKE; this interaction stimulates IKBKE activating autophosphorylation and is induced upon viral infection. Interacts with TBK1. Interacts with SP1; this interaction potentiates SP1-induced CDKN1A/WAF1/CIP1 transcription. Interacts with GSK3A and GSK3B. Interacts with several death receptors, inclusing FAS, TNFRSF10A and TNFRSF10B. Recruited to TNFRSF10B in the absence of receptor stimulation. When TNFRSF10B is stimulated, further recruited to the receptor and cleaved by caspases. A large proteolytic fragment remains associated with TNFRSF10B. Interacts (via C-terminus) with NXF1/TAP; this interaction may be partly involved in DDX3X nuclear export and in NXF1 localization to stress granules. Identified in an mRNP complex, composed of at least DHX9, DDX3X, ELAVL1, HNRNPU, IGF2BP1/2, ILF3, PABPC1, PCBP2, PTBP2, STAU1, STAU2, SYNCRIP and YBX1. The interaction with IGF2BP1/2 is RNA-dependent. Directly interacts with PABPC1/PABP1 in an RNA-independent manner. This interaction increases in stressed cells and decreases during cell recovery. Interacts (via C-terminus) with MAVS/IPS-1; this interaction potentiates MAVS-mediated IFNB induction. Interacts with ERCC6/CBS. Interacts with DHX33 in an RNA-independent manner. Interacts with DDX5 in the cytoplasm; this interaction may be more efficient when both proteins are unphosphorylated. Interacts with RIGI. Interacts with IFIH1/MDA5. Interacts with NCAPH; this interaction may be important for the NCAPH localization at condensing chromosomes during mitosis. Interacts with NLRP3 (via NACHT domain) under inflammasome-activating conditions. Interacts with CAPRIN1. Interacts with HNF4A and NR0B2/SHP in an RNA-independent manner; this interaction disrupts the interaction between HNF4 and NR0B2 that forms inactive heterodimers and enhances the formation of active HNF4 homodimers. Interacts with CREBBP/CBP. Interacts with EP300/p300. Interacts with gamma-tubulin. Interacts with phosphorylated TP53. Directly interacts with RELA/p65; this interaction may trap RELA in the cytoplasm, impairing nuclear relocalization upon TNF activating signals. Phosphorylated by TBK1; the phosphorylation is required for the synergistic induction of IFNB mediated by TBK1 and DDX3X. Phosphorylated by IKBKE. Also phosphorylated by CSNK1E; this phosphorylation may inhibit RNA-stimulated ATPase activity. Post-translationally, upon stimulation of death receptors, including TNFRSF10B, recruited to receptors and cleaved by caspases. Proteolytic fragments remain associated with the receptors. This cleavage presumably inactivates DDX3X anti-apoptotic function. In terms of processing, ubiquitinated by RNF39 via 'Lys-48'-linked ubiquitination; leading to proteasomal degradation. As to expression, expressed in ovary, including in germinal vesicle immature and metaphase II (MII) stage oocytes (at protein level). In the brain, expressed in the granule cells of the cerebellum and dentate gyrus, the pyramidal cells of the hippocampus, the ependymal cells lining the ventricles, choroid plexi and olfactory bulb. Also accumulates in the thalamic nuclei, the dorsal region of the colliculi and the pontine nucleus.

It localises to the cell membrane. Its subcellular location is the nucleus. The protein localises to the cytoplasm. The protein resides in the stress granule. It is found in the inflammasome. It localises to the cell projection. Its subcellular location is the lamellipodium. The enzyme catalyses ATP + H2O = ADP + phosphate + H(+). Functionally, multifunctional ATP-dependent RNA helicase. The ATPase activity can be stimulated by various ribo-and deoxynucleic acids indicative for a relaxed substrate specificity. In vitro can unwind partially double-stranded DNA with a preference for 5'-single-stranded DNA overhangs. Binds RNA G-quadruplex (rG4s) structures, including those located in the 5'-UTR of NRAS mRNA. Involved in many cellular processes, which do not necessarily require its ATPase/helicase catalytic activities. Involved in transcription regulation. Positively regulates CDKN1A/WAF1/CIP1 transcription in an SP1-dependent manner, hence inhibits cell growth. This function requires its ATPase, but not helicase activity. CDKN1A up-regulation may be cell-type specific. Binds CDH1/E-cadherin promoter and represses its transcription. Potentiates HNF4A-mediated MTTP transcriptional activation; this function requires ATPase, but not helicase activity. Facilitates HNF4A acetylation, possibly catalyzed by CREBBP/EP300, thereby increasing the DNA-binding affinity of HNF4 to its response element. In addition, disrupts the interaction between HNF4 and SHP that forms inactive heterodimers and enhances the formation of active HNF4 homodimers. By promoting HNF4A-induced MTTP expression, may play a role in lipid homeostasis. May positively regulate TP53 transcription. Associates with mRNPs, predominantly with spliced mRNAs carrying an exon junction complex (EJC). Involved in the regulation of translation initiation. Not involved in the general process of translation, but promotes efficient translation of selected complex mRNAs, containing highly structured 5'-untranslated regions (UTR). This function depends on helicase activity. Might facilitate translation by resolving secondary structures of 5'-UTRs during ribosome scanning. Alternatively, may act prior to 43S ribosomal scanning and promote 43S pre-initiation complex entry to mRNAs exhibiting specific RNA motifs, by performing local remodeling of transcript structures located close to the cap moiety. Independently of its ATPase activity, promotes the assembly of functional 80S ribosomes and disassembles from ribosomes prior to the translation elongation process. Positively regulates the translation of cyclin E1/CCNE1 mRNA and consequently promotes G1/S-phase transition during the cell cycle. May activate TP53 translation. Required for endoplasmic reticulum stress-induced ATF4 mRNA translation. Independently of its ATPase/helicase activity, enhances IRES-mediated translation; this activity requires interaction with EIF4E. Independently of its ATPase/helicase activity, has also been shown specifically repress cap-dependent translation, possibly by acting on translation initiation factor EIF4E. Involved in innate immunity, acting as a viral RNA sensor. Binds viral RNAs and promotes the production of type I interferon (IFN-alpha and IFN-beta). Potentiate MAVS/RIGI-mediated induction of IFNB in early stages of infection. Enhances IFNB1 expression via IRF3/IRF7 pathway and participates in NFKB activation in the presence of MAVS and TBK1. Involved in TBK1 and IKBKE-dependent IRF3 activation leading to IFNB induction, acts as a scaffolding adapter that links IKBKE and IRF3 and coordinates their activation. Involved in the TLR7/TLR8 signaling pathway leading to type I interferon induction, including IFNA4 production. In this context, acts as an upstream regulator of IRF7 activation by MAP3K14/NIK and CHUK/IKKA. Stimulates CHUK autophosphorylation and activation following physiological activation of the TLR7 and TLR8 pathways, leading to MAP3K14/CHUK-mediated activatory phosphorylation of IRF7. Also stimulates MAP3K14/CHUK-dependent NF-kappa-B signaling. Negatively regulates TNF-induced IL6 and IL8 expression, via the NF-kappa-B pathway. May act by interacting with RELA/p65 and trapping it in the cytoplasm. May also bind IFNB promoter; the function is independent of IRF3. Involved in both stress and inflammatory responses. Independently of its ATPase/helicase activity, required for efficient stress granule assembly through its interaction with EIF4E, hence promotes survival in stressed cells. Independently of its helicase activity, regulates NLRP3 inflammasome assembly through interaction with NLRP3 and hence promotes cell death by pyroptosis during inflammation. This function is independent of helicase activity. Therefore DDX3X availability may be used to interpret stress signals and choose between pro-survival stress granules and pyroptotic NLRP3 inflammasomes and serve as a live-or-die checkpoint in stressed cells. In association with GSK3A/B, negatively regulates extrinsic apoptotic signaling pathway via death domain receptors, including TNFRSF10B, slowing down the rate of CASP3 activation following death receptor stimulation. Cleavage by caspases may inactivate DDX3X and relieve the inhibition. Independently of its ATPase/helicase activity, allosteric activator of CSNK1E. Stimulates CSNK1E-mediated phosphorylation of DVL2, thereby involved in the positive regulation of Wnt/beta-catenin signaling pathway. Also activates CSNK1A1 and CSNK1D in vitro, but it is uncertain if these targets are physiologically relevant. ATPase and casein kinase-activating functions are mutually exclusive. May be involved in mitotic chromosome segregation. The protein is ATP-dependent RNA helicase DDX3X (Ddx3x) of Mus musculus (Mouse).